The following is a 276-amino-acid chain: Rhomboid protease GlpG (276 aa).

6 consecutive transmembrane segments (helical) span residues 94–114, 142–162, 169–189, 192–212, 229–249, and 250–270; these read GPVTWVMMIACVVVFIAMQIL, ALMHFSLMHILFNLLWWWYLG, LGSGKLIVITLISALLSGYVQ, FSGPWFGGLSGVVYALMGYVW, LIIFALIWIVAGWFDLFGMSM, and ANGAHIAGLAVGLAMAFVDSL. The active-site Nucleophile is the S201. Residue H254 is part of the active site.

The protein belongs to the peptidase S54 family.

The protein resides in the cell inner membrane. The enzyme catalyses Cleaves type-1 transmembrane domains using a catalytic dyad composed of serine and histidine that are contributed by different transmembrane domains.. Functionally, rhomboid-type serine protease that catalyzes intramembrane proteolysis. The polypeptide is Rhomboid protease GlpG (Escherichia fergusonii (strain ATCC 35469 / DSM 13698 / CCUG 18766 / IAM 14443 / JCM 21226 / LMG 7866 / NBRC 102419 / NCTC 12128 / CDC 0568-73)).